The chain runs to 56 residues: Small ribosomal subunit protein uS14 (56 aa).

Belongs to the universal ribosomal protein uS14 family. In terms of assembly, component of the small ribosomal subunit (SSU). Mature yeast ribosomes consist of a small (40S) and a large (60S) subunit. The 40S small subunit contains 1 molecule of ribosomal RNA (18S rRNA) and at least 33 different proteins. The large 60S subunit contains 3 rRNA molecules (25S, 5.8S and 5S rRNA) and at least 46 different proteins.

The protein localises to the cytoplasm. The protein resides in the nucleus. Its function is as follows. Component of the ribosome, a large ribonucleoprotein complex responsible for the synthesis of proteins in the cell. The small ribosomal subunit (SSU) binds messenger RNAs (mRNAs) and translates the encoded message by selecting cognate aminoacyl-transfer RNA (tRNA) molecules. The large subunit (LSU) contains the ribosomal catalytic site termed the peptidyl transferase center (PTC), which catalyzes the formation of peptide bonds, thereby polymerizing the amino acids delivered by tRNAs into a polypeptide chain. The nascent polypeptides leave the ribosome through a tunnel in the LSU and interact with protein factors that function in enzymatic processing, targeting, and the membrane insertion of nascent chains at the exit of the ribosomal tunnel. The sequence is that of Small ribosomal subunit protein uS14 (rps29) from Schizosaccharomyces pombe (strain 972 / ATCC 24843) (Fission yeast).